The chain runs to 616 residues: GPI mannosyltransferase 3 (616 aa).

Over 1–16 (MAHEVHRIKPKLGRTQ) the chain is Cytoplasmic. A helical transmembrane segment spans residues 17–37 (IFWVFLAFRVLNAVLTRTFFQ). Topologically, residues 38-86 (ADEFWQALEPAHWKAFKYGELTWEWKFGVRSYLFPMIFELTYRLVSLSS) are lumenal. A helical transmembrane segment spans residues 87–107 (ILLHYALLLLSTIGSDLLILL). Topologically, residues 108–136 (LPKYELSWQVAEDLKRLPFDVTRSFEYYG) are cytoplasmic. Residues 137–157 (VIYAPKIVMAVLASIGEYYIV) form a helical membrane-spanning segment. At 158–188 (RFVQKLYLLTLDKRNEKEEEERRSGLSEITK) the chain is on the lumenal side. A helical membrane pass occupies residues 189–209 (FALLLSLTNFFNCFFITRTFI). Over 210–240 (NSFEMILTSIALYYWDWTGGQMIKESSFTKS) the chain is Cytoplasmic. The helical transmembrane segment at 241-261 (LIFAFLACLQRPSSGLIWVIP) threads the bilayer. At 262–278 (SISLILNLVGKKQYHLL) the chain is on the lumenal side. A helical transmembrane segment spans residues 279-299 (FITFSKVLRSFFLVFTANAII). Residues 300-338 (DMYFYEKVTFPFFRFLKFNFTTPLSKFYGVAPWHFHFFQ) lie on the Cytoplasmic side of the membrane. A helical membrane pass occupies residues 339–359 (SLPIVLGASIPAFAFGLFFPL). The Lumenal segment spans residues 360 to 392 (SKRSFPKKYLNPFFQVKLTILLNLLVYSTLPHK). Residues 393–413 (EFRFIFPLQPLFILISSFGLL) traverse the membrane as a helical segment. Over 414 to 423 (RLDRDYWKRL) the chain is Cytoplasmic. A helical transmembrane segment spans residues 424-444 (SGLKSLLWLVPFVSVFIALLL). The Lumenal segment spans residues 445–616 (DTFHESGSIE…DYSDIPAADI (172 aa)).

This sequence belongs to the glycosyltransferase 22 family. PIGB subfamily.

The protein localises to the endoplasmic reticulum membrane. It functions in the pathway glycolipid biosynthesis; glycosylphosphatidylinositol-anchor biosynthesis. Functionally, mannosyltransferase involved in glycosylphosphatidylinositol-anchor biosynthesis. Transfers the third mannose to Man2-GlcN-acyl-PI during GPI precursor assembly. This is GPI mannosyltransferase 3 (GPI10) from Saccharomyces cerevisiae (strain ATCC 204508 / S288c) (Baker's yeast).